Reading from the N-terminus, the 235-residue chain is Voltage-gated hydrogen channel 1 (235 aa).

The Cytoplasmic segment spans residues 1 to 62 (MSRYLKHFTV…VMKKLFSSRR (62 aa)). Residues 63–83 (FQIVIVFLVIVDALLVLGELL) form a helical membrane-spanning segment. Residues 84–100 (MDLKIIHPDKYHIAPKV) are Extracellular-facing. The helical transmembrane segment at 101 to 123 (FHYLSLSILTIFLVEVGFKIFVY) threads the bilayer. Residues 124–131 (GREFFHHK) are Cytoplasmic-facing. Residues 132–152 (FEVLDSIVVVVSFILDLVLLF) traverse the membrane as a helical segment. Topologically, residues 153 to 159 (REHEFEA) are extracellular. A helical transmembrane segment spans residues 160 to 180 (VGLLILLRLWRVARIINGIIL). At 181-235 (SVKTRSEQQVSKLKQVNLKLATKVEQLQHSCVEKEQEIERLTRMLKQHGLLSEQT) the chain is on the cytoplasmic side. A coiled-coil region spans residues 187–228 (EQQVSKLKQVNLKLATKVEQLQHSCVEKEQEIERLTRMLKQH).

Belongs to the hydrogen channel family. As to quaternary structure, homodimer.

The protein resides in the membrane. Its subcellular location is the cell membrane. Mediates the voltage-dependent proton permeability of excitable membranes. Forms a proton-selective channel through which protons may pass in accordance with their electrochemical gradient. The sequence is that of Voltage-gated hydrogen channel 1 (HVCN1) from Gallus gallus (Chicken).